The following is a 137-amino-acid chain: Oleosin Ara h 11.0102 (137 aa).

Ala-2 bears the N-acetylalanine; alternate mark. 2 helical membrane-spanning segments follow: residues 27 to 47 (AVVA…ATVI) and 55 to 75 (LFVI…LLGL).

The protein belongs to the oleosin family. As to expression, expressed in seeds (at protein level).

Its subcellular location is the lipid droplet. It localises to the membrane. Functionally, may have a structural role to stabilize the lipid body during desiccation of the seed by preventing coalescence of the oil. Probably interacts with both lipid and phospholipid moieties of lipid bodies. May also provide recognition signals for specific lipase anchorage in lipolysis during seedling growth. The sequence is that of Oleosin Ara h 11.0102 from Arachis hypogaea (Peanut).